The sequence spans 425 residues: Elongation factor 1-alpha (425 aa).

In terms of domain architecture, tr-type G spans 5 to 221 (KPHMNLAVIG…NALSEPEKPT (217 aa)). Positions 14–21 (GHIDHGKS) are G1. Position 14–21 (14–21 (GHIDHGKS)) interacts with GTP. S21 provides a ligand contact to Mg(2+). Positions 70–74 (GITID) are G2. Positions 91–94 (DCPG) are G3. Residues 91–95 (DCPGH) and 146–149 (NKMD) each bind GTP. A G4 region spans residues 146–149 (NKMD). Residues 185 to 187 (SAF) are G5.

The protein belongs to the TRAFAC class translation factor GTPase superfamily. Classic translation factor GTPase family. EF-Tu/EF-1A subfamily.

The protein resides in the cytoplasm. The enzyme catalyses GTP + H2O = GDP + phosphate + H(+). Functionally, GTP hydrolase that promotes the GTP-dependent binding of aminoacyl-tRNA to the A-site of ribosomes during protein biosynthesis. The protein is Elongation factor 1-alpha of Methanoculleus marisnigri (strain ATCC 35101 / DSM 1498 / JR1).